The primary structure comprises 309 residues: Small ribosomal subunit protein mS23 (309 aa).

This sequence belongs to the mitochondrion-specific ribosomal protein mS23 family. Component of the mitochondrial small ribosomal subunit.

The protein resides in the mitochondrion. This is Small ribosomal subunit protein mS23 (RSM25) from Lodderomyces elongisporus (strain ATCC 11503 / CBS 2605 / JCM 1781 / NBRC 1676 / NRRL YB-4239) (Yeast).